The chain runs to 95 residues: Opiscorpine-3 (95 aa).

An N-terminal signal peptide occupies residues 1–19 (MNNKLTALIFLGLLAIASC). The region spanning 55 to 95 (EFMCVANVDMTKSCDTHCQKASGEKGYCHGTKCKCGVPLSY) is the BetaSPN-type CS-alpha/beta domain. Disulfide bonds link C58-C82, C68-C87, and C72-C89.

Belongs to the long chain scorpion toxin family. Class 3 subfamily. In terms of tissue distribution, expressed by the venom gland.

It localises to the secreted. Has antimicrobial activity against yeasts and bacteria. The sequence is that of Opiscorpine-3 from Opistophthalmus carinatus (African yellow leg scorpion).